The following is a 583-amino-acid chain: cAMP-dependent protein kinase catalytic subunit 3 (583 aa).

Disordered stretches follow at residues 51–75 and 98–264; these read ATPTQRGKATGDNGTTGTPARTIGK and SGTA…QTAK. Composition is skewed to polar residues over residues 52–69 and 98–107; these read TPTQRGKATGDNGTTGTP and SGTAGSTSKL. A compositionally biased stretch (low complexity) spans 108-162; it reads TTGNGSGNTMTSAYKIPSNNSTTANDSSNTETTFTFKLGRSNGRSSSNVASSESS. Over residues 163-176 the composition is skewed to acidic residues; it reads DPLESDYSEEDPEQ. Positions 181–200 are enriched in low complexity; the sequence is PDPATNSRSSSTATTTTTSS. Over residues 205–219 the composition is skewed to acidic residues; sequence NDVDEEDEEDDENEG. Residues 221–234 show a composition bias toward basic and acidic residues; the sequence is GNGRDADDATHDSS. A compositionally biased stretch (acidic residues) spans 235 to 256; that stretch reads ESIEEDDGNETDDEEDDDESEE. Positions 274–528 constitute a Protein kinase domain; sequence YQIIKTVGTG…ADDVKRHRWF (255 aa). ATP-binding positions include 280–288 and K303; that span reads VGTGTFGRV. D397 functions as the Proton acceptor in the catalytic mechanism. The 55-residue stretch at 529 to 583 folds into the AGC-kinase C-terminal domain; it reads KHLNWNDVYSKKLKPPILPDVHHDGDTKNFDDYPEKDWKPAKAVDQRDLQYFNDF.

Belongs to the protein kinase superfamily. AGC Ser/Thr protein kinase family. cAMP subfamily. Expressed in embryonic mesoderm, and the optic lamina, wing disk and leg disks of third instar larvae. More abundant in adult head than adult body.

It carries out the reaction L-seryl-[protein] + ATP = O-phospho-L-seryl-[protein] + ADP + H(+). It catalyses the reaction L-threonyl-[protein] + ATP = O-phospho-L-threonyl-[protein] + ADP + H(+). Does not have an essential role in development. The sequence is that of cAMP-dependent protein kinase catalytic subunit 3 (Pka-C3) from Drosophila melanogaster (Fruit fly).